Consider the following 309-residue polypeptide: Probable 2,4-dienoyl-CoA reductase decr-1.2 [(3E)-enoyl-CoA-producing] (309 aa).

NADP(+) contacts are provided by residues 28–60, 32–37, Arg57, and Asp83; these read VLVT…RRME and GGGTGI. Position 57 (Arg57) interacts with substrate. The substrate site is built by Phe116 and Ser124. Residue Tyr166 is the Proton acceptor of the active site. Residues Lys181 and 207-210 each bind NADP(+); that span reads PGPI. Arg218 is a binding site for substrate.

Belongs to the short-chain dehydrogenases/reductases (SDR) family. 2,4-dienoyl-CoA reductase subfamily.

It catalyses the reaction a (2E,4E)-dienoyl-CoA + NADPH + H(+) = a 4,5-saturated-(3E)-enoyl-CoA + NADP(+). The catalysed reaction is a (2E,4Z)-dienoyl-CoA + NADPH + H(+) = a 4,5-saturated-(3E)-enoyl-CoA + NADP(+). Its function is as follows. Auxiliary enzyme of beta-oxidation. It participates in the metabolism of unsaturated fatty enoyl-CoA esters having double bonds in both even- and odd-numbered positions. Catalyzes the NADP-dependent reduction of 2,4-dienoyl-CoA to yield trans-3-enoyl-CoA. In Caenorhabditis elegans, this protein is Probable 2,4-dienoyl-CoA reductase decr-1.2 [(3E)-enoyl-CoA-producing].